The following is a 344-amino-acid chain: Methionine import ATP-binding protein MetN (344 aa).

One can recognise an ABC transporter domain in the interval 2–241; that stretch reads IEINRVNKIF…PKTALAQEFI (240 aa). 38 to 45 contacts ATP; the sequence is GSSGAGKS.

Belongs to the ABC transporter superfamily. Methionine importer (TC 3.A.1.24) family. As to quaternary structure, the complex is composed of two ATP-binding proteins (MetN), two transmembrane proteins (MetI) and a solute-binding protein (MetQ).

It is found in the cell inner membrane. The enzyme catalyses L-methionine(out) + ATP + H2O = L-methionine(in) + ADP + phosphate + H(+). It catalyses the reaction D-methionine(out) + ATP + H2O = D-methionine(in) + ADP + phosphate + H(+). In terms of biological role, part of the ABC transporter complex MetNIQ involved in methionine import. Responsible for energy coupling to the transport system. In Aliivibrio fischeri (strain ATCC 700601 / ES114) (Vibrio fischeri), this protein is Methionine import ATP-binding protein MetN.